A 203-amino-acid chain; its full sequence is RNA annealing protein YRA2 (203 aa).

N-acetylmethionine is present on M1. 2 disordered regions span residues 1 to 60 (MDKA…REEP) and 134 to 203 (EIYQ…YMKG). Positions 11-20 (NSHTDSSSNH) are enriched in polar residues. Basic and acidic residues predominate over residues 47-60 (SRSKDRLYREREEP). An RRM domain is found at 64–138 (KRIRISKIPL…AKIEVEIYQP (75 aa)). 2 stretches are compositionally biased toward basic residues: residues 139–153 (QRKHSRMNAHNRRKQ) and 163–180 (PGSHYRQRPNRVSKKNKG).

The protein belongs to the YRA1 family. In terms of assembly, associates with mRNPs. Interacts with YRA1.

Its subcellular location is the nucleus. In terms of biological role, involved in export of poly(A) mRNAs from the nucleus. Recruited to the coding sequences as well as poly-A sites of active genes. This chain is RNA annealing protein YRA2 (YRA2), found in Saccharomyces cerevisiae (strain RM11-1a) (Baker's yeast).